The sequence spans 307 residues: Stage III sporulation protein AA (307 aa).

143–150 (GPPQTGKT) is a binding site for ATP.

This is Stage III sporulation protein AA (spoIIIAA) from Bacillus subtilis (strain 168).